A 471-amino-acid chain; its full sequence is Ribulose bisphosphate carboxylase large chain 2 (471 aa).

Asparagine 116 and threonine 166 together coordinate substrate. Residue lysine 168 is the Proton acceptor of the active site. Residue lysine 170 participates in substrate binding. Mg(2+) contacts are provided by lysine 194, aspartate 196, and glutamate 197. Lysine 194 bears the N6-carboxylysine mark. Histidine 287 functions as the Proton acceptor in the catalytic mechanism. The substrate site is built by arginine 288, histidine 320, and serine 372.

It belongs to the RuBisCO large chain family. Type I subfamily. In terms of assembly, heterohexadecamer of 8 large chains and 8 small chains; disulfide-linked. The disulfide link is formed within the large subunit homodimers. It depends on Mg(2+) as a cofactor. Post-translationally, the disulfide bond which can form in the large chain dimeric partners within the hexadecamer appears to be associated with oxidative stress and protein turnover.

It carries out the reaction 2 (2R)-3-phosphoglycerate + 2 H(+) = D-ribulose 1,5-bisphosphate + CO2 + H2O. It catalyses the reaction D-ribulose 1,5-bisphosphate + O2 = 2-phosphoglycolate + (2R)-3-phosphoglycerate + 2 H(+). Its function is as follows. RuBisCO catalyzes two reactions: the carboxylation of D-ribulose 1,5-bisphosphate, the primary event in carbon dioxide fixation, as well as the oxidative fragmentation of the pentose substrate. Both reactions occur simultaneously and in competition at the same active site. The polypeptide is Ribulose bisphosphate carboxylase large chain 2 (Allochromatium vinosum (strain ATCC 17899 / DSM 180 / NBRC 103801 / NCIMB 10441 / D) (Chromatium vinosum)).